We begin with the raw amino-acid sequence, 306 residues long: Ornithine carbamoyltransferase (306 aa).

Residues 51–54 (STRT), Gln-78, Arg-102, and 129–132 (HPVQ) each bind carbamoyl phosphate. L-ornithine is bound by residues Asn-157, Asp-221, and 225-226 (SM). Carbamoyl phosphate is bound by residues 261–262 (CL) and Arg-289.

It belongs to the aspartate/ornithine carbamoyltransferase superfamily. OTCase family.

The protein resides in the cytoplasm. The catalysed reaction is carbamoyl phosphate + L-ornithine = L-citrulline + phosphate + H(+). Its pathway is amino-acid biosynthesis; L-arginine biosynthesis; L-arginine from L-ornithine and carbamoyl phosphate: step 1/3. Its function is as follows. Reversibly catalyzes the transfer of the carbamoyl group from carbamoyl phosphate (CP) to the N(epsilon) atom of ornithine (ORN) to produce L-citrulline. In Campylobacter hominis (strain ATCC BAA-381 / DSM 21671 / CCUG 45161 / LMG 19568 / NCTC 13146 / CH001A), this protein is Ornithine carbamoyltransferase.